The primary structure comprises 3620 residues: MSSPFLWSLIILLTFAESNGEAGGFELQRQKRSIDFQQPRMATERGNLVFLVGSAQNIEFRTGSLGKIKLNEEDLGECLHQIQKNKEDITDLKRSAVNVPQNISSQIHQLNSKLVDLERKFQSLQQTVDKKVCSSNPCQNGGTCLNLHDSFFCICPSQWKGPLCSVDVNECQIYSGTPLGCQNGATCENTAGSYSCLCSPETHGPQCASKYDDCEGGSKALCVHGICEDLVRVKADEPKYNCICDAGWTSPLNSSACVLDIDECNLQHAPCSPLVQCFNTQGSFYCGACPTGWQGNGYSCQDIDECKINNGGCSVVPPVMCVNTLGSYHCQACPPGYQGDGRVCTVIDICSVNNGGCHPEASCSSVLGSLPLCTCLPGYTGNGYGPNGCAQLSDTCLSHPCLNGQCIETVSGYLCKCESGWAGINCTENINECLSNPCFNGGTCVDGVNAFSCECTRFWTGFLCQIPQQVCGGSLSGMDGSFSYMSPDVGYVHDVNCFWVIRTEDRKVLRITFTFFQLESVNNCPHEFLQIHDGDSSAALQLGRFCGSVLPHELLSSNNALYFHLYSEHFRSGRGFTIRWETQQPECGGILMGTYGSIKSPGYPGNYPPGRDCVWQVVTSPDLLITFTFGTLSLEHHDDCSKDYLEIRDGPLYQDPSLGKFCTTLSVPPLQTTGPFARVHFHSDNQINDQGFHITYLTSPSDLHCGGNYTDPEGLLSSDLSGPFTHNRQCIYIIKQPLGEQIQVNFTHVELEGQSSCSQSHIEVRDDKILLGKVCDNETLPHIKSIRNHIWIRLKIDASLVRASFRAVYQVACGGELTGEGVIRSPFYPNVYPGERICRWTIHQPQSQVVILNFTAFGIESSAHCDTDYIEIGSSSILGSPENKKYCGTDIPLFITSVYNFLYVIFVKSSSTENHGFMAKFSAADLACGEILTESTGIIQSPGHPNIYPHGINCTWHILVQPGHLIHLIFRKFHLEFHYNCTNDYLEVYDTGSNTYLGRYCGKSIPPSLTSSTNSLKLIFVADSDLAYEGFLINYEATDASSACMEDYTENSGTFTSPNFPNNYPNNWKCIYRITVETSQQIALHFTNFALEEAIGGQCVADFVEIRDGGYETSPPLGTYCGSIPPPRIISHSNKLWLQFTSDFLGSGPGFSAYWDGSLTGCGGNITTPTGVFTSPSYPMPYYHSSECYWLLKASHGSPFELEFEDFHLEHHPNCTLDYLAVYDGPSTSSHLLSQLCGNEKPPVIRSTGDSMFLKFRTDEDQQGGGFLAKYQQTCRNVVIVNRNYGILESIHYPNPYSDNQRCNWTIQATTGNTVNYTFLAFELENHINCSTDYLELYDGPRRMGRYCGADMPPTGSTTGSKLQVLFYTDGVGHQEKGFQMQWFIHGCGGELSGTTGSFSSPGYPNTYPPNKECIWYITTAPGSSIQLTIHDFDVEYHARCNFDVLEVYGGPDFHSPRITQLCSQRSSENPMQVSSTGNELAIRFKTDSSINGRGFNASWQAVPGGCGGIFQAPNGEIHSPNYPSPYRGNTDCSWVIRVERNHRILLNFTDFDLEPQDSCITAYDGLSSTTTRLASVCGRQQLTNPITSSGNSLFLRFQSGPSRQGRGFRAQFNQVCGGHILTNSFDTISSPLFPAKYPNNQNCSWVIQAQPPFNHITLSFDHFGLESSTTCTQDFLEILDGDYDDAPLRGRYCGHSMPHPITSFSSALTLRFVSDSRVNSDGFHATYAASSSACGGTFHMAEGIFNSPGYPEVYPSNVECVWNIVSSPGNRLQLSFITFQLEDSQDCSRDFVEVREGNATGHLVGRYCGNVLPLNYSSIVGHILWIRFVSDGSGSGTGFQATFTKIFGNDNIVGTHGKIASPLWPGRYPHNSNYQWIVNVNATQVIHGRILEIDIEGAQSCYYDKLRVYDGLGIHSRLIGTYCGTQTTSFSSSRNSLTFQFSSDSSITGKGFLLEWFAVNASGGPLPTIATGACGGFLRTGDAPVFLFSPGWPESYSNSADCTWLIQAPDSTVELNILSLDIEAQRTCDYDKLVIRDGDSNLAPQLAVLCGREIPGPIRSTGEYMFIRFTSDFSITGAGFNASFHKSCGGYLHADRGIITSPQYPETYSPNLNCSWHVLVQSGLTIAVHFEQPFQIPSGDSSCSQGDYLVLKNGPDIYSPPLGPYGRNGHFCGSRPSSTLFTSDNQMFVQFISDGSNGGQGFKIKYEAKSLACGGNIYIHDVNSAGYVTSPGHPNNYPQHADCNWLIAAPPGKLIRVQFEDQFNIEETPNCVSNYLELRDGVDSNAPLLAKLCGRSLPSSQLSSGEVMYLRFRSDNSSTQVGFKIKYAIAQCGGRVTGQSGIIESSGYPTLPYRDNSFCEWHLKGPSGHYLTIHFEDFHLQNSSGCEKDFVEIWENHTSGNLLGRYCGNTIPDSIDTSSNVALVRFVTDGSVTASGFRLRFESSMEACGGELQGPTGTFTSPNYPNPNPHGRVCEWRIMVQEGRRITLTFNNLRLEAHPSCYSEHVTIFNGIRNNSPQLEKLCGSVNASSEIKSSGNTMKVVFFTDGSRPFGGFSATYTSSEDAVCGGSLTHFPEGNFTSPGYNGVSNYSRNLNCEWTLSNPNQGNSSIYIHFEDFYLESHQDCQFDVLEFRVGNADGPLMWRLCGPSKPIVPLVIPYPEVWIHFVTNEHVEHVGFHAEYSFTDCGGIQLGESGVIASPNYPASYDSLTHCSWLLEAPQGFTITLTFSDFDIEDHATCAWDSVSVRNGGSPGSPIIGQYCGTSNPRTIQSGSNQLVVIFNSDHSVQNGGFYATWNTQTLGCGGILHSDNGTIRSPHWPQNFPENSRCSWTVITHESKQLEISFDNNFRIPSGDGQCQNSFVKVWAGTEEVAESLLATGCGNVAPGSILTPRNVFIAVFQSQETPAQGFSASFVSRCGGNFTNPSGYILSPNYPRQYDNNMNCTYIIEADPLSVVLLTFESFHLEARSAITGSCANDGVHIIRGSNLSSTPFATVCGNEILSPVTILGPVLLNFYSNAHTTDLGFKFNYKITSCGGVFNVSTGVIKSPAYSYSDYPNNIYCLYTIVGRDDRVVQLKFSDFDVVPSTFCSQDYLAIYDGSNISDPLLGKFCGSNLPPNIKSSNHSMLLVFKTDSFQTARGWKITFQQTLGPQQGCGGYLTGSDNTFASPDSDSNGRYDKNLNCVWFIIAPVNKLIKLTFNTFALEAQSAMQRCIYDYVKLYDGDSENANLAGTFCGSTVPAPFISSGNFLTVQFVSDVTLEREGFNATYTTVDMPCGGTYNATWTPQSISSPNSSNPEVPLSMCMWFLEAPPHQQVKITVWALELHSQDCDQNYLEFRDSPESNGSPGPQICGRNASATPTFYSSRSTAIVIFKSEVLNRNSRVGFTYQIAGCNREYNKAFGNLKSPGWPDNYDNNLDCTVILTAPQNHTISLFFHSFGIEDSSECTHDFLEVRNGSDSSSPLFGTYCGTLLPDPIFSRNNKLYLRFKTDSATSNRGYEIVWTSSPSGCGGTLYGDSGSFTSPGYPGTYPNNTDCEWAIIAPAGRPVTVTFYFISIDDPGDCVQNYLILYDGPDANSPSFGPYCGADTNIAPFVASSHRVFIKFHAEYAVYPSAIRLTWDS.

A signal peptide spans 1-20; sequence MSSPFLWSLIILLTFAESNG. The propeptide at 21–32 is removed in mature form; sequence EAGGFELQRQKR. The tract at residues 39–46 is interaction with AMN; the sequence is PRMATERG. Asn102 carries an N-linked (GlcNAc...) asparagine glycan. The EGF-like 1 domain occupies 129–165; sequence DKKVCSSNPCQNGGTCLNLHDSFFCICPSQWKGPLCS. 6 disulfide bridges follow: Cys133/Cys144, Cys138/Cys153, Cys155/Cys164, Cys171/Cys187, Cys181/Cys196, and Cys198/Cys207. Positions 167 to 208 constitute an EGF-like 2; calcium-binding domain; sequence DVNECQIYSGTPLGCQNGATCENTAGSYSCLCSPETHGPQCA. Asn253 carries N-linked (GlcNAc...) asparagine glycosylation. The EGF-like 3; calcium-binding domain occupies 260–301; that stretch reads DIDECNLQHAPCSPLVQCFNTQGSFYCGACPTGWQGNGYSCQ. Intrachain disulfides connect Cys264–Cys277, Cys271–Cys286, Cys289–Cys300, Cys306–Cys321, Cys313–Cys330, Cys333–Cys344, Cys350–Cys363, Cys357–Cys373, Cys396–Cys406, Cys401–Cys415, Cys417–Cys426, Cys433–Cys444, Cys438–Cys453, Cys455–Cys464, Cys471–Cys497, Cys524–Cys546, Cys587–Cys613, Cys640–Cys662, and Cys705–Cys730. The 44-residue stretch at 302 to 345 folds into the EGF-like 4; calcium-binding domain; sequence DIDECKINNGGCSVVPPVMCVNTLGSYHCQACPPGYQGDGRVCT. EGF-like domains are found at residues 346–382 and 392–427; these read VIDI…YTGN and LSDT…INCT. Asn425 carries N-linked (GlcNAc...) asparagine glycosylation. Residues 429–465 form the EGF-like 7; calcium-binding domain; it reads NINECLSNPCFNGGTCVDGVNAFSCECTRFWTGFLCQ. 13 CUB domains span residues 471 to 583, 587 to 699, 705 to 812, 813 to 924, 928 to 1038, 1044 to 1158, 1162 to 1274, 1275 to 1386, 1388 to 1503, 1507 to 1616, 1617 to 1731, 1735 to 1847, and 1849 to 1960; these read CGGS…WETQ, CGGI…YLTS, CGGN…YQVA, CGGE…FSAA, CGEI…YEAT, CMED…WDGS, CGGN…YQQT, CRNV…WFIH, CGGE…WQAV, CGGI…FNQV, CGGH…YAAS, CGGT…FTKI, and GNDN…WFAV. 2 N-linked (GlcNAc...) asparagine glycosylation sites follow: Asn708 and Asn745. A disulfide bridge links Cys757 with Cys775. N-linked (GlcNAc...) asparagine glycosylation occurs at Asn777. A disulfide bridge connects residues Cys813 and Cys838. Asn853 carries an N-linked (GlcNAc...) asparagine glycan. Cystine bridges form between Cys865-Cys887 and Cys928-Cys954. The N-linked (GlcNAc...) asparagine glycan is linked to Asn953. Glu976 serves as a coordination point for Ca(2+). A glycan (N-linked (GlcNAc...) asparagine) is linked at Asn980. Cys981 and Cys1001 are joined by a disulfide. Ca(2+)-binding residues include Asp984, Asp1023, Asp1025, and Leu1026. Cysteines 1044 and 1070 form a disulfide. Ca(2+) is bound by residues Glu1092, Asp1102, and Asp1143. Residues Cys1099 and Cys1121 are joined by a disulfide bond. Cysteines 1162 and 1188 form a disulfide. Asn1165 is a glycosylation site (N-linked (GlcNAc...) asparagine). Position 1210 (Glu1210) interacts with Ca(2+). N-linked (GlcNAc...) asparagine glycosylation occurs at Asn1214. An intrachain disulfide couples Cys1215 to Cys1237. Ca(2+) contacts are provided by Asp1218, Asp1259, and Gln1262. Residues Cys1275 and Cys1303 are joined by a disulfide bond. N-linked (GlcNAc...) asparagine glycans are attached at residues Asn1304 and Asn1316. Position 1325 (Glu1325) interacts with Ca(2+). An N-linked (GlcNAc...) asparagine glycan is attached at Asn1329. A disulfide bridge connects residues Cys1330 and Cys1348. Ca(2+) contacts are provided by Asp1333, Asp1370, and Val1372. 2 disulfides stabilise this stretch: Cys1388/Cys1414 and Cys1441/Cys1463. Asn1497 carries an N-linked (GlcNAc...) asparagine glycan. A disulfide bond links Cys1507 and Cys1533. A glycan (N-linked (GlcNAc...) asparagine) is linked at Asn1548. 5 disulfides stabilise this stretch: Cys1560-Cys1578, Cys1617-Cys1644, Cys1672-Cys1694, Cys1735-Cys1761, and Cys1788-Cys1809. N-linked (GlcNAc...) asparagine glycosylation is present at Asn1643. Residues Asn1799, Asn1816, and Asn1882 are each glycosylated (N-linked (GlcNAc...) asparagine). A disulfide bridge links Cys1902 with Cys1924. Asn1961 is a glycosylation site (N-linked (GlcNAc...) asparagine). Disulfide bonds link Cys1975–Cys2003 and Cys2029–Cys2051. CUB domains are found at residues 1975–2088, 2089–2210, 2214–2331, 2333–2445, 2449–2562, 2567–2684, 2686–2798, 2802–2916, 2917–3032, 3034–3147, 3154–3271, 3275–3392, 3392–3504, and 3508–3620; these read CGGF…FHKS, CGGY…YEAK, CGGN…YAIA, CGGR…FESS, CGGE…YTSS, CGGS…YSFT, CGGI…WNTQ, CGGI…FVSR, CGGN…YKIT, CGGV…FQQT, CGGY…YTTV, CGGT…IAGC, CNRE…WTSS, and CGGT…TWDS. Asn2082 and Asn2114 each carry an N-linked (GlcNAc...) asparagine glycan. 3 disulfide bridges follow: Cys2089–Cys2115, Cys2214–Cys2244, and Cys2272–Cys2294. The N-linked (GlcNAc...) asparagine glycan is linked to Asn2317. Cys2333 and Cys2360 are joined by a disulfide. N-linked (GlcNAc...) asparagine glycans are attached at residues Asn2383 and Asn2397. Intrachain disulfides connect Cys2387–Cys2408, Cys2449–Cys2475, and Cys2502–Cys2524. 4 N-linked (GlcNAc...) asparagine glycosylation sites follow: Asn2528, Asn2578, Asn2589, and Asn2607. A disulfide bond links Cys2567 and Cys2596. Disulfide bonds link Cys2625–Cys2646, Cys2686–Cys2712, Cys2739–Cys2761, Cys2802–Cys2828, Cys2857–Cys2880, Cys2917–Cys2943, and Cys2974–Cys2996. Asn2810 carries N-linked (GlcNAc...) asparagine glycosylation. N-linked (GlcNAc...) asparagine glycosylation is found at Asn2920, Asn2942, and Asn2986. Thr3005 is subject to Phosphothreonine. Cystine bridges form between Cys3034/Cys3061 and Cys3088/Cys3110. 3 N-linked (GlcNAc...) asparagine glycosylation sites follow: Asn3039, Asn3100, and Asn3122. Disulfide bonds link Cys3154–Cys3182 and Cys3212–Cys3234. Residues Asn3265, Asn3280, and Asn3292 are each glycosylated (N-linked (GlcNAc...) asparagine). Cystine bridges form between Cys3275–Cys3303 and Cys3329–Cys3351. Asn3354 carries N-linked (GlcNAc...) asparagine glycosylation. The cysteines at positions 3392 and 3418 are disulfide-linked. N-linked (GlcNAc...) asparagine glycans are attached at residues Asn3427, Asn3454, and Asn3530. 3 disulfide bridges follow: Cys3445–Cys3467, Cys3508–Cys3534, and Cys3561–Cys3583.

In terms of assembly, interacts with AMN. Component of the cubam complex composed of one CUBN trimer and one AMN chain. The cubam complex can dimerize. Interacts with LRP2 in a dual-receptor complex in a calcium-dependent manner. Found in a complex with PID1/PCLI1, LRP1 and CUBNI. Interacts with LRP1 and PID1/PCLI1. The precursor is cleaved by a trans-Golgi proteinase furin, removing a propeptide. Post-translationally, N-glycosylated. As to expression, detected in kidney cortex (at protein level). Detected in kidney, duodenum and jejunum.

Its subcellular location is the apical cell membrane. It is found in the cell membrane. The protein resides in the membrane. It localises to the coated pit. The protein localises to the endosome. Its subcellular location is the lysosome membrane. Endocytic receptor which plays a role in lipoprotein, vitamin and iron metabolism by facilitating their uptake. Acts together with LRP2 to mediate endocytosis of high-density lipoproteins, GC, hemoglobin, ALB, TF and SCGB1A1. Acts together with AMN to mediate endocytosis of the CBLIF-cobalamin complex. Binds to ALB, MB, Kappa and lambda-light chains, TF, hemoglobin, GC, SCGB1A1, APOA1, high density lipoprotein, and the CBLIF-cobalamin complex. Ligand binding requires calcium. Serves as important transporter in several absorptive epithelia, including intestine, renal proximal tubules and embryonic yolk sac. May play an important role in the development of the peri-implantation embryo through internalization of APOA1 and cholesterol. Binds to LGALS3 at the maternal-fetal interface. The protein is Cubilin (CUBN) of Canis lupus familiaris (Dog).